Here is a 55-residue protein sequence, read N- to C-terminus: ATP synthase protein 8 (55 aa).

The helical transmembrane segment at 6-26 (PHPWFAILVFSWIFFLVILPK) threads the bilayer.

Belongs to the ATPase protein 8 family. In terms of assembly, F-type ATPases have 2 components, CF(1) - the catalytic core - and CF(0) - the membrane proton channel.

Its subcellular location is the mitochondrion membrane. Functionally, mitochondrial membrane ATP synthase (F(1)F(0) ATP synthase or Complex V) produces ATP from ADP in the presence of a proton gradient across the membrane which is generated by electron transport complexes of the respiratory chain. F-type ATPases consist of two structural domains, F(1) - containing the extramembraneous catalytic core and F(0) - containing the membrane proton channel, linked together by a central stalk and a peripheral stalk. During catalysis, ATP synthesis in the catalytic domain of F(1) is coupled via a rotary mechanism of the central stalk subunits to proton translocation. Part of the complex F(0) domain. Minor subunit located with subunit a in the membrane. This chain is ATP synthase protein 8 (MT-ATP8), found in Squalus acanthias (Spiny dogfish).